We begin with the raw amino-acid sequence, 542 residues long: Chaperonin GroEL 1 (542 aa).

Residues 30–33 (TLGP), lysine 51, 87–91 (DGTTT), glycine 415, and aspartate 496 each bind ATP.

Belongs to the chaperonin (HSP60) family. Forms a cylinder of 14 subunits composed of two heptameric rings stacked back-to-back. Interacts with the co-chaperonin GroES.

The protein localises to the cytoplasm. It catalyses the reaction ATP + H2O + a folded polypeptide = ADP + phosphate + an unfolded polypeptide.. Its function is as follows. Together with its co-chaperonin GroES, plays an essential role in assisting protein folding. The GroEL-GroES system forms a nano-cage that allows encapsulation of the non-native substrate proteins and provides a physical environment optimized to promote and accelerate protein folding. This is Chaperonin GroEL 1 from Sinorhizobium fredii (strain NBRC 101917 / NGR234).